A 271-amino-acid chain; its full sequence is Thiazole synthase (271 aa).

Lys-95 serves as the catalytic Schiff-base intermediate with DXP. Residues Gly-156, 182-183, and 204-205 contribute to the 1-deoxy-D-xylulose 5-phosphate site; these read AG and NT.

It belongs to the ThiG family. As to quaternary structure, homotetramer. Forms heterodimers with either ThiH or ThiS.

It is found in the cytoplasm. The enzyme catalyses [ThiS sulfur-carrier protein]-C-terminal-Gly-aminoethanethioate + 2-iminoacetate + 1-deoxy-D-xylulose 5-phosphate = [ThiS sulfur-carrier protein]-C-terminal Gly-Gly + 2-[(2R,5Z)-2-carboxy-4-methylthiazol-5(2H)-ylidene]ethyl phosphate + 2 H2O + H(+). It participates in cofactor biosynthesis; thiamine diphosphate biosynthesis. Functionally, catalyzes the rearrangement of 1-deoxy-D-xylulose 5-phosphate (DXP) to produce the thiazole phosphate moiety of thiamine. Sulfur is provided by the thiocarboxylate moiety of the carrier protein ThiS. In vitro, sulfur can be provided by H(2)S. The protein is Thiazole synthase of Shewanella amazonensis (strain ATCC BAA-1098 / SB2B).